A 454-amino-acid chain; its full sequence is tRNA modification GTPase MnmE (454 aa).

(6S)-5-formyl-5,6,7,8-tetrahydrofolate-binding residues include Arg-23, Glu-80, and Lys-120. In terms of domain architecture, TrmE-type G spans 216-377 (GMKVVIAGRP…LRNHLKQSMG (162 aa)). A K(+)-binding site is contributed by Asn-226. GTP is bound by residues 226–231 (NAGKSS), 245–251 (TDIAGTT), 270–273 (DTAG), 335–338 (NKAD), and 358–360 (SAR). Ser-230 is a binding site for Mg(2+). 3 residues coordinate K(+): Thr-245, Ile-247, and Thr-250. Thr-251 contacts Mg(2+). Lys-454 is a (6S)-5-formyl-5,6,7,8-tetrahydrofolate binding site.

Belongs to the TRAFAC class TrmE-Era-EngA-EngB-Septin-like GTPase superfamily. TrmE GTPase family. In terms of assembly, homodimer. Heterotetramer of two MnmE and two MnmG subunits. It depends on K(+) as a cofactor.

It localises to the cytoplasm. Exhibits a very high intrinsic GTPase hydrolysis rate. Involved in the addition of a carboxymethylaminomethyl (cmnm) group at the wobble position (U34) of certain tRNAs, forming tRNA-cmnm(5)s(2)U34. This is tRNA modification GTPase MnmE from Shigella dysenteriae serotype 1 (strain Sd197).